The primary structure comprises 296 residues: D-alanine--D-alanine ligase (296 aa).

Residues 103 to 293 enclose the ATP-grasp domain; it reads KEILMHHRMP…FDSFVKRIIE (191 aa). Position 129 to 180 (129 to 180) interacts with ATP; that stretch reads ISFPVAVKPSSGGSSIATFKVKSIQELKHAYEEASKYGEVMIEQWVTGKEIT. Asp247, Glu260, and Asn262 together coordinate Mg(2+).

This sequence belongs to the D-alanine--D-alanine ligase family. Mg(2+) is required as a cofactor. Mn(2+) serves as cofactor.

It is found in the cytoplasm. The catalysed reaction is 2 D-alanine + ATP = D-alanyl-D-alanine + ADP + phosphate + H(+). Its pathway is cell wall biogenesis; peptidoglycan biosynthesis. Cell wall formation. This chain is D-alanine--D-alanine ligase, found in Francisella tularensis subsp. novicida (strain U112).